Here is a 98-residue protein sequence, read N- to C-terminus: N(2)-fixation sustaining protein CowN (98 aa).

This sequence belongs to the CowN family.

Functionally, is required to sustain N(2)-dependent growth in the presence of low levels of carbon monoxide (CO). Probably acts by protecting the N(2) fixation ability of the nitrogenase complex, which is inactivated in the presence of CO. The polypeptide is N(2)-fixation sustaining protein CowN (Trichlorobacter lovleyi (strain ATCC BAA-1151 / DSM 17278 / SZ) (Geobacter lovleyi)).